The sequence spans 164 residues: UPF0304 protein YfbU (164 aa).

The protein belongs to the UPF0304 family.

The chain is UPF0304 protein YfbU from Salmonella choleraesuis (strain SC-B67).